Here is a 493-residue protein sequence, read N- to C-terminus: Glutathione hydrolase 6 (493 aa).

The Cytoplasmic segment spans residues 1–54 (MERAEEPVVYQKLLPWEPSLESEEEVEEEETSEALVLNPRRHQDSSRNKAGGLP). Residues 19 to 52 (SLESEEEVEEEETSEALVLNPRRHQDSSRNKAGG) form a disordered region. The span at 20–32 (LESEEEVEEEETS) shows a compositional bias: acidic residues. A helical; Signal-anchor for type II membrane protein transmembrane segment spans residues 55–75 (GTWARVVAALLLLAVGCSLAV). The Extracellular portion of the chain corresponds to 76–493 (RQLQNQGRST…PHACCPFQGF (418 aa)). Positions 83-105 (RSTGSLGSVAPPPGGHSHGPGVY) are disordered. Asn161 and Asn370 each carry an N-linked (GlcNAc...) asparagine glycan. The span at 442–455 (PPTQAQHQHQGQQE) shows a compositional bias: low complexity. The tract at residues 442-464 (PPTQAQHQHQGQQEPTEHPSTCG) is disordered.

This sequence belongs to the gamma-glutamyltransferase family. In terms of assembly, heterodimer composed of the light and heavy chains. The active site is located in the light chain. Post-translationally, cleaved by autocatalysis into a large and a small subunit and the autocatalytic cleavage is essential to the functional activation of the enzyme.

The protein resides in the membrane. It catalyses the reaction an N-terminal (5-L-glutamyl)-[peptide] + an alpha-amino acid = 5-L-glutamyl amino acid + an N-terminal L-alpha-aminoacyl-[peptide]. The enzyme catalyses glutathione + H2O = L-cysteinylglycine + L-glutamate. It carries out the reaction an S-substituted glutathione + H2O = an S-substituted L-cysteinylglycine + L-glutamate. The protein operates within sulfur metabolism; glutathione metabolism. Functionally, hydrolyzes and transfers gamma-glutamyl moieties from glutathione and other gamma-glutamyl compounds to acceptors. The chain is Glutathione hydrolase 6 from Homo sapiens (Human).